The sequence spans 551 residues: Arginine--tRNA ligase (551 aa).

The 'HIGH' region motif lies at alanine 125 to histidine 135.

Belongs to the class-I aminoacyl-tRNA synthetase family. In terms of assembly, monomer.

The protein localises to the cytoplasm. It catalyses the reaction tRNA(Arg) + L-arginine + ATP = L-arginyl-tRNA(Arg) + AMP + diphosphate. The sequence is that of Arginine--tRNA ligase from Oleidesulfovibrio alaskensis (strain ATCC BAA-1058 / DSM 17464 / G20) (Desulfovibrio alaskensis).